A 158-amino-acid polypeptide reads, in one-letter code: NAD(P)H-quinone oxidoreductase subunit J, chloroplastic (158 aa).

It belongs to the complex I 30 kDa subunit family. As to quaternary structure, NDH is composed of at least 16 different subunits, 5 of which are encoded in the nucleus.

The protein localises to the plastid. Its subcellular location is the chloroplast thylakoid membrane. The enzyme catalyses a plastoquinone + NADH + (n+1) H(+)(in) = a plastoquinol + NAD(+) + n H(+)(out). It carries out the reaction a plastoquinone + NADPH + (n+1) H(+)(in) = a plastoquinol + NADP(+) + n H(+)(out). In terms of biological role, NDH shuttles electrons from NAD(P)H:plastoquinone, via FMN and iron-sulfur (Fe-S) centers, to quinones in the photosynthetic chain and possibly in a chloroplast respiratory chain. The immediate electron acceptor for the enzyme in this species is believed to be plastoquinone. Couples the redox reaction to proton translocation, and thus conserves the redox energy in a proton gradient. The protein is NAD(P)H-quinone oxidoreductase subunit J, chloroplastic of Nicotiana tabacum (Common tobacco).